The sequence spans 1210 residues: Ice nucleation protein (1210 aa).

The segment at 165 to 1156 (AVYGSTLTGA…LSGGENSTLI (992 aa)) is octapeptide periodicity.

This sequence belongs to the bacterial ice nucleation protein family.

Its subcellular location is the cell outer membrane. Its function is as follows. Ice nucleation proteins enable bacteria to nucleate crystallization in supercooled water. The sequence is that of Ice nucleation protein (inaW) from Pseudomonas fluorescens.